A 480-amino-acid polypeptide reads, in one-letter code: Cysteine--tRNA ligase (480 aa).

Cys27 serves as a coordination point for Zn(2+). The short motif at 29-39 (PTVYNYAHIGN) is the 'HIGH' region element. Residues Cys221, His246, and Glu250 each coordinate Zn(2+). The 'KMSKS' region motif lies at 278 to 282 (KMSKS). Lys281 is a binding site for ATP.

This sequence belongs to the class-I aminoacyl-tRNA synthetase family. As to quaternary structure, monomer. Requires Zn(2+) as cofactor.

The protein resides in the cytoplasm. The enzyme catalyses tRNA(Cys) + L-cysteine + ATP = L-cysteinyl-tRNA(Cys) + AMP + diphosphate. The protein is Cysteine--tRNA ligase of Borrelia garinii subsp. bavariensis (strain ATCC BAA-2496 / DSM 23469 / PBi) (Borreliella bavariensis).